We begin with the raw amino-acid sequence, 163 residues long: Phosphopantetheine adenylyltransferase (163 aa).

Ser-9 contacts substrate. Residues 9-10 (SF) and His-17 each bind ATP. Substrate-binding residues include Lys-41, Thr-73, and Arg-87. ATP-binding positions include 88-90 (GLR), Glu-98, and 123-129 (YSFISSG).

The protein belongs to the bacterial CoaD family. Homohexamer. Requires Mg(2+) as cofactor.

It is found in the cytoplasm. The enzyme catalyses (R)-4'-phosphopantetheine + ATP + H(+) = 3'-dephospho-CoA + diphosphate. It functions in the pathway cofactor biosynthesis; coenzyme A biosynthesis; CoA from (R)-pantothenate: step 4/5. Reversibly transfers an adenylyl group from ATP to 4'-phosphopantetheine, yielding dephospho-CoA (dPCoA) and pyrophosphate. The polypeptide is Phosphopantetheine adenylyltransferase (Desulforudis audaxviator (strain MP104C)).